The primary structure comprises 215 residues: uncharacterized protein (215 aa).

The chain crosses the membrane as a helical span at residues 98-119 (AAALAVAVASLCVCTLLLTHIV).

It is found in the membrane. This is an uncharacterized protein from Treponema pallidum (strain Nichols).